The primary structure comprises 376 residues: E3 ubiquitin-protein ligase RNF34 (376 aa).

An FYVE-type zinc finger spans residues 56–107 (EGPNIVCKACGLSFSVFRKKHVCCDCKKDFCSLCSVSQENLRRCSTCHLLQE). The region spanning 115-134 (LMRLKVKDLRQYLLLRNIPT) is the SAP 1 domain. The residue at position 169 (Ser169) is a Phosphoserine. Positions 216–256 (IASANTDDDDDDDDDDDDDEDDDDEQEEEEQNPGLSKKKAR) are disordered. The segment covering 221–246 (TDDDDDDDDDDDDDEDDDDEQEEEEQ) has biased composition (acidic residues). Phosphoserine is present on residues Ser258 and Ser260. One can recognise an SAP 2 domain in the interval 268–282 (VEGMSVRQLKEILAR). The RING-type zinc-finger motif lies at 329–364 (CRICMDAVIDCVLLECGHMVTCTKCGKRMSECPICR).

In terms of assembly, interacts with CASP8 and CASP10. Interacts with p53/TP53; involved in p53/TP53 ubiquitination. Interacts (via RING-type zinc finger) with MDM2; the interaction stabilizes MDM2. Interacts (via RING-type zinc finger) with PPARGC1A. Interacts with NOD1. Autoubiquitinated (in vitro). In terms of processing, proteolytically cleaved by caspases upon induction of apoptosis by TNF.

It is found in the cell membrane. It localises to the endomembrane system. The protein localises to the nucleus. Its subcellular location is the nucleus speckle. The protein resides in the cytoplasm. It is found in the cytosol. It catalyses the reaction S-ubiquitinyl-[E2 ubiquitin-conjugating enzyme]-L-cysteine + [acceptor protein]-L-lysine = [E2 ubiquitin-conjugating enzyme]-L-cysteine + N(6)-ubiquitinyl-[acceptor protein]-L-lysine.. Its pathway is protein modification; protein ubiquitination. Functionally, E3 ubiquitin-protein ligase that regulates several biological processes through the ubiquitin-mediated proteasomal degradation of various target proteins. Ubiquitinates the caspases CASP8 and CASP10, promoting their proteasomal degradation, to negatively regulate cell death downstream of death domain receptors in the extrinsic pathway of apoptosis. May mediate 'Lys-48'-linked polyubiquitination of RIPK1 and its subsequent proteasomal degradation thereby indirectly regulating the tumor necrosis factor-mediated signaling pathway. Negatively regulates p53/TP53 through its direct ubiquitination and targeting to proteasomal degradation. Indirectly, may also negatively regulate p53/TP53 through ubiquitination and degradation of SFN. Mediates PPARGC1A proteasomal degradation probably through ubiquitination thereby indirectly regulating the metabolism of brown fat cells. Possibly involved in innate immunity, through 'Lys-48'-linked polyubiquitination of NOD1 and its subsequent proteasomal degradation. This chain is E3 ubiquitin-protein ligase RNF34, found in Mus musculus (Mouse).